Reading from the N-terminus, the 465-residue chain is Phosphomannomutase/phosphoglucomutase (465 aa).

Catalysis depends on Ser110, which acts as the Phosphoserine intermediate. Residues Ser110, Asp244, Asp246, and Asp248 each contribute to the Mg(2+) site. The substrate site is built by Glu327, Ser329, and His331.

The protein belongs to the phosphohexose mutase family. In terms of assembly, monomer. It depends on Mg(2+) as a cofactor.

It carries out the reaction alpha-D-mannose 1-phosphate = D-mannose 6-phosphate. It catalyses the reaction alpha-D-glucose 1-phosphate = alpha-D-glucose 6-phosphate. It participates in nucleotide-sugar biosynthesis; GDP-alpha-D-mannose biosynthesis; alpha-D-mannose 1-phosphate from D-fructose 6-phosphate: step 2/2. Its pathway is bacterial outer membrane biogenesis; lipopolysaccharide biosynthesis. In terms of biological role, the phosphomannomutase activity produces a precursor for alginate polymerization. The alginate layer causes a mucoid phenotype and provides a protective barrier against host immune defenses and antibiotics. Also involved in core-LPS biosynthesis due to its phosphoglucomutase activity. Essential for biofilm production. The protein is Phosphomannomutase/phosphoglucomutase (algC) of Pseudomonas syringae pv. tomato (strain ATCC BAA-871 / DC3000).